A 387-amino-acid polypeptide reads, in one-letter code: Succinate--CoA ligase [ADP-forming] subunit beta (387 aa).

In terms of domain architecture, ATP-grasp spans 9-244; that stretch reads KQLFAEYGIP…KTQEDETEVL (236 aa). ATP-binding positions include lysine 46, 53–55, glycine 102, and glutamate 107; that span reads GRG. The Mg(2+) site is built by asparagine 199 and aspartate 213. Residues asparagine 264 and 321 to 323 each bind substrate; that span reads GIV.

Belongs to the succinate/malate CoA ligase beta subunit family. In terms of assembly, heterotetramer of two alpha and two beta subunits. The cofactor is Mg(2+).

The enzyme catalyses succinate + ATP + CoA = succinyl-CoA + ADP + phosphate. The catalysed reaction is GTP + succinate + CoA = succinyl-CoA + GDP + phosphate. It functions in the pathway carbohydrate metabolism; tricarboxylic acid cycle; succinate from succinyl-CoA (ligase route): step 1/1. Its function is as follows. Succinyl-CoA synthetase functions in the citric acid cycle (TCA), coupling the hydrolysis of succinyl-CoA to the synthesis of either ATP or GTP and thus represents the only step of substrate-level phosphorylation in the TCA. The beta subunit provides nucleotide specificity of the enzyme and binds the substrate succinate, while the binding sites for coenzyme A and phosphate are found in the alpha subunit. The chain is Succinate--CoA ligase [ADP-forming] subunit beta from Xylella fastidiosa (strain M23).